Here is a 416-residue protein sequence, read N- to C-terminus: UDP-N-acetylglucosamine 1-carboxyvinyltransferase (416 aa).

22 to 23 provides a ligand contact to phosphoenolpyruvate; sequence KN. A UDP-N-acetyl-alpha-D-glucosamine-binding site is contributed by R92. The Proton donor role is filled by C116. Residue C116 is modified to 2-(S-cysteinyl)pyruvic acid O-phosphothioketal. UDP-N-acetyl-alpha-D-glucosamine is bound by residues 121–125, D304, and I326; that span reads RPVDQ.

This sequence belongs to the EPSP synthase family. MurA subfamily.

The protein resides in the cytoplasm. It catalyses the reaction phosphoenolpyruvate + UDP-N-acetyl-alpha-D-glucosamine = UDP-N-acetyl-3-O-(1-carboxyvinyl)-alpha-D-glucosamine + phosphate. Its pathway is cell wall biogenesis; peptidoglycan biosynthesis. Its function is as follows. Cell wall formation. Adds enolpyruvyl to UDP-N-acetylglucosamine. The sequence is that of UDP-N-acetylglucosamine 1-carboxyvinyltransferase from Cupriavidus taiwanensis (strain DSM 17343 / BCRC 17206 / CCUG 44338 / CIP 107171 / LMG 19424 / R1) (Ralstonia taiwanensis (strain LMG 19424)).